Here is a 153-residue protein sequence, read N- to C-terminus: Ribosome maturation factor RimP (153 aa).

This sequence belongs to the RimP family.

The protein resides in the cytoplasm. In terms of biological role, required for maturation of 30S ribosomal subunits. The sequence is that of Ribosome maturation factor RimP from Clostridium botulinum (strain Langeland / NCTC 10281 / Type F).